The primary structure comprises 480 residues: Membrane-bound lytic murein transglycosylase F (480 aa).

The signal sequence occupies residues 1–15; sequence MNRILLTLLTLTLLA. The interval 16-259 is non-LT domain; the sequence is GCQRVAVEET…HLDEKYFAHV (244 aa). An LT domain region spans residues 260–480; it reads KRFDYVDTRA…EKAITGAQPE (221 aa). Residue Glu304 is part of the active site.

The protein in the N-terminal section; belongs to the bacterial solute-binding protein 3 family. In the C-terminal section; belongs to the transglycosylase Slt family.

It localises to the cell outer membrane. It catalyses the reaction Exolytic cleavage of the (1-&gt;4)-beta-glycosidic linkage between N-acetylmuramic acid (MurNAc) and N-acetylglucosamine (GlcNAc) residues in peptidoglycan, from either the reducing or the non-reducing ends of the peptidoglycan chains, with concomitant formation of a 1,6-anhydrobond in the MurNAc residue.. Its function is as follows. Murein-degrading enzyme that degrades murein glycan strands and insoluble, high-molecular weight murein sacculi, with the concomitant formation of a 1,6-anhydromuramoyl product. Lytic transglycosylases (LTs) play an integral role in the metabolism of the peptidoglycan (PG) sacculus. Their lytic action creates space within the PG sacculus to allow for its expansion as well as for the insertion of various structures such as secretion systems and flagella. The chain is Membrane-bound lytic murein transglycosylase F from Shewanella woodyi (strain ATCC 51908 / MS32).